Here is a 358-residue protein sequence, read N- to C-terminus: N-acylethanolamine-hydrolyzing acid amidase (358 aa).

The signal sequence occupies residues 1–26; it reads MQGTGHPVRPVLELLLLLLLLAGVGG. N-linked (GlcNAc...) asparagine glycans are attached at residues N39 and N108. C127 (nucleophile) is an active-site residue. N-linked (GlcNAc...) asparagine glycans are attached at residues N310, N334, and N356.

Belongs to the acid ceramidase family. In terms of assembly, heterodimer of an alpha and a beta subunit, produced by autocatalytic cleavage. N-glycosylated. Tunicamycin treatment causes a reduction in specific activity against N-palmitoylethanolamine. In terms of processing, autoproteolytic cleavage at pH 4.5 gives rise to the alpha and beta subunit. Cleavage gives rise to a conformation change that activates the enzyme. The same catalytic Cys residue mediates the autoproteolytic cleavage and subsequent hydrolysis of lipid substrates.

It localises to the lysosome. The protein resides in the membrane. It carries out the reaction N-hexadecanoylethanolamine + H2O = ethanolamine + hexadecanoate. The enzyme catalyses an N-(long-chain fatty acyl)ethanolamine + H2O = a long-chain fatty acid + ethanolamine. The catalysed reaction is N-dodecanoylethanolamine + H2O = dodecanoate + ethanolamine. It catalyses the reaction N-tetradecanoylethanolamine + H2O = tetradecanoate + ethanolamine. It carries out the reaction an N-acylsphing-4-enine + H2O = sphing-4-enine + a fatty acid. The enzyme catalyses N-hexadecanoylsphing-4-enine + H2O = sphing-4-enine + hexadecanoate. The catalysed reaction is N-dodecanoylsphing-4-enine + H2O = dodecanoate + sphing-4-enine. It participates in lipid metabolism; fatty acid metabolism. Functionally, degrades bioactive fatty acid amides to their corresponding acids, with the following preference: N-palmitoylethanolamine &gt; N-myristoylethanolamine &gt; N-stearoylethanolamine &gt; N-oleoylethanolamine &gt; N-linoleoylethanolamine &gt; N-arachidonoylethanolamine. The protein is N-acylethanolamine-hydrolyzing acid amidase of Oryctolagus cuniculus (Rabbit).